A 723-amino-acid chain; its full sequence is Catalase-peroxidase (723 aa).

Positions 96 to 224 (WHAAGTYRIQ…LAAVQMGLIY (129 aa)) form a cross-link, tryptophyl-tyrosyl-methioninium (Trp-Tyr) (with M-250). The Proton acceptor role is filled by H97. Residues 224–250 (YVNPEGVNSQPDPIKTGEQVRVTFARM) constitute a cross-link (tryptophyl-tyrosyl-methioninium (Tyr-Met) (with W-96)). H265 contacts heme b.

Belongs to the peroxidase family. Peroxidase/catalase subfamily. As to quaternary structure, homodimer or homotetramer. Requires heme b as cofactor. Post-translationally, formation of the three residue Trp-Tyr-Met cross-link is important for the catalase, but not the peroxidase activity of the enzyme.

The enzyme catalyses H2O2 + AH2 = A + 2 H2O. It catalyses the reaction 2 H2O2 = O2 + 2 H2O. In terms of biological role, bifunctional enzyme with both catalase and broad-spectrum peroxidase activity. The chain is Catalase-peroxidase from Marinobacter nauticus (strain ATCC 700491 / DSM 11845 / VT8) (Marinobacter aquaeolei).